The sequence spans 143 residues: Large ribosomal subunit protein uL13 (143 aa).

This sequence belongs to the universal ribosomal protein uL13 family. In terms of assembly, part of the 50S ribosomal subunit.

In terms of biological role, this protein is one of the early assembly proteins of the 50S ribosomal subunit, although it is not seen to bind rRNA by itself. It is important during the early stages of 50S assembly. The polypeptide is Large ribosomal subunit protein uL13 (Alkaliphilus oremlandii (strain OhILAs) (Clostridium oremlandii (strain OhILAs))).